The primary structure comprises 21 residues: Cupiennin-6a (21 aa).

Ser21 is modified (serine amide).

In terms of tissue distribution, expressed by the venom gland.

The protein resides in the secreted. In Cupiennius salei (American wandering spider), this protein is Cupiennin-6a.